The primary structure comprises 82 residues: MQTAYWLMVMMMVWITAPLYEGGKPNDVIRGLVPDDLTPQFILRSLISRRRSDKDVRADQTCIWKTWCPPSLWRRHDRKGKD.

Residues 1–22 form the signal peptide; the sequence is MQTAYWLMVMMMVWITAPLYEG. Residues 23 to 57 constitute a propeptide that is removed on maturation; sequence GKPNDVIRGLVPDDLTPQFILRSLISRRRSDKDVR. A disulfide bridge connects residues Cys-62 and Cys-68. A D-tryptophan modification is found at Trp-64. Pro-69 and Pro-70 each carry 4-hydroxyproline. A propeptide spanning residues 72 to 82 is cleaved from the precursor; the sequence is LWRRHDRKGKD.

This sequence belongs to the conotoxin C superfamily. Consomatin family. As to expression, expressed by the venom duct.

It localises to the secreted. In terms of biological role, moderately activates human somatostatin receptors (SSTR) with a preferential activation of SSTR1 and SSTR4. In vivo, does not cause behavioral changes in mice within a few minutes of intracranial injection, but causes a progressive loss of movement thereafter. Four to five hours after injection, mice recover, even with the highest dose tested. Shows antinociception and antihyperalgesia activities in two mouse models of acute pain, most probably by acting outside the central nervous system. In Conus rolani (Cone snail), this protein is Consomatin Ro2.